A 242-amino-acid polypeptide reads, in one-letter code: Putative cellulose biosynthesis protein BcsQ (242 aa).

ATP is bound at residue 1 to 8; the sequence is MRGGVGTT.

It belongs to the BcsQ family.

Functionally, a C-terminal pseudogene fragment of BcsQ, which has a premature stop codon at position 6 of the intact protein. The mutation prevents cellulose synthesis, and has polar effects on transcription of downstream gene bcsA and probably also bcsB, bcsZ and bcsC. When the reading frame is restored cellulose biosynthesis is also restored, see (AC P0DP92) for an intact protein. May play a role in subcellular localization of an active cellulose biosynthesis apparatus at the bacterial cell pole. This is Putative cellulose biosynthesis protein BcsQ (bcsQ) from Escherichia coli (strain K12).